The chain runs to 352 residues: 4-hydroxy-3-methylbut-2-en-1-yl diphosphate synthase (flavodoxin) (352 aa).

Residues cysteine 263, cysteine 266, cysteine 298, and glutamate 305 each contribute to the [4Fe-4S] cluster site.

It belongs to the IspG family. [4Fe-4S] cluster serves as cofactor.

The catalysed reaction is (2E)-4-hydroxy-3-methylbut-2-enyl diphosphate + oxidized [flavodoxin] + H2O + 2 H(+) = 2-C-methyl-D-erythritol 2,4-cyclic diphosphate + reduced [flavodoxin]. Its pathway is isoprenoid biosynthesis; isopentenyl diphosphate biosynthesis via DXP pathway; isopentenyl diphosphate from 1-deoxy-D-xylulose 5-phosphate: step 5/6. In terms of biological role, converts 2C-methyl-D-erythritol 2,4-cyclodiphosphate (ME-2,4cPP) into 1-hydroxy-2-methyl-2-(E)-butenyl 4-diphosphate. This is 4-hydroxy-3-methylbut-2-en-1-yl diphosphate synthase (flavodoxin) from Sulfurimonas denitrificans (strain ATCC 33889 / DSM 1251) (Thiomicrospira denitrificans (strain ATCC 33889 / DSM 1251)).